The primary structure comprises 900 residues: Zinc finger protein 62 homolog (900 aa).

The interval 1–97 is disordered; that stretch reads MSHLKTSTED…EASEKSLHLS (97 aa). Residue Lys5 forms a Glycyl lysine isopeptide (Lys-Gly) (interchain with G-Cter in SUMO2) linkage. A compositionally biased stretch (acidic residues) spans 9–18; the sequence is EDEEPTEEYE. Residues 47-73 are compositionally biased toward basic and acidic residues; it reads SKVENQQKKPVENRMKEDKSSIREAIS. Glycyl lysine isopeptide (Lys-Gly) (interchain with G-Cter in SUMO2) cross-links involve residues Lys48, Lys62, Lys65, Lys82, and Lys92. The segment covering 83–94 has biased composition (basic and acidic residues); that stretch reads TEQEGEASEKSL. C2H2-type zinc fingers lie at residues 225 to 247, 253 to 275, 281 to 303, 309 to 331, 337 to 359, 365 to 387, 393 to 415, 421 to 443, 449 to 471, 477 to 499, 505 to 527, 533 to 555, and 561 to 583; these read CKCD…KRIH, YECG…KRIH, YECD…KRIH, YECD…KSIH, YKCD…KVIH, YKCD…KSIH, HECK…RTIH, YVCD…RRLH, YKCD…KGIH, YKCS…KRIH, FGCD…KRIH, and YKCE…KSVH. Lys587 is covalently cross-linked (Glycyl lysine isopeptide (Lys-Gly) (interchain with G-Cter in SUMO2)). C2H2-type zinc fingers lie at residues 589-611, 617-639, 645-667, 673-695, 701-723, 729-751, 757-779, 785-807, 813-834, and 840-862; these read FKCD…KKVH, YKCD…RRVH, YECD…KRIH, YECD…KSTH, HTCD…KRVH, FKCV…KRIH, YVCD…KRIH, YECD…KSVH, YNCE…KRIH, and YRCN…KRTH. Residue Lys748 forms a Glycyl lysine isopeptide (Lys-Gly) (interchain with G-Cter in SUMO2) linkage. Lys882 is covalently cross-linked (Glycyl lysine isopeptide (Lys-Gly) (interchain with G-Cter in SUMO2)).

The protein belongs to the krueppel C2H2-type zinc-finger protein family.

It localises to the nucleus. May play a role in differentiating skeletal muscle. This is Zinc finger protein 62 homolog (ZFP62) from Homo sapiens (Human).